The sequence spans 259 residues: Probable dihydroorotate dehydrogenase B (NAD(+)), electron transfer subunit (259 aa).

The FAD-binding FR-type domain maps to 1 to 89 (MLPLNVTITQ…RGPFGKGFTL (89 aa)). 4 residues coordinate [2Fe-2S] cluster: Cys-211, Cys-216, Cys-219, and Cys-229.

The protein belongs to the PyrK family. Heterotetramer of 2 PyrK and 2 PyrD type B subunits. [2Fe-2S] cluster is required as a cofactor. The cofactor is FAD.

It participates in pyrimidine metabolism; UMP biosynthesis via de novo pathway; orotate from (S)-dihydroorotate (NAD(+) route): step 1/1. Its function is as follows. Responsible for channeling the electrons from the oxidation of dihydroorotate from the FMN redox center in the PyrD type B subunit to the ultimate electron acceptor NAD(+). In Methanosarcina acetivorans (strain ATCC 35395 / DSM 2834 / JCM 12185 / C2A), this protein is Probable dihydroorotate dehydrogenase B (NAD(+)), electron transfer subunit.